Here is a 184-residue protein sequence, read N- to C-terminus: Leucine-rich repeat-containing protein 20 (184 aa).

LRR repeat units lie at residues 23-44, 51-72, 75-96, 98-120, 121-141, and 145-167; these read GSDTLDLADCKLVSFPICIYKV, QIHLITLANNELKSLTSKFMTT, QLRELRLEGNYLFRLPNEVSSL, HLRAIDLSRNQFQDFPEQLTTLP, ALETINLEENEIVDVPVEKLA, and ALRVINLRLNPLSADVRVIAPPL. Phosphoserine is present on serine 175.

The polypeptide is Leucine-rich repeat-containing protein 20 (Lrrc20) (Mus musculus (Mouse)).